We begin with the raw amino-acid sequence, 149 residues long: Large ribosomal subunit protein eL19 (149 aa).

The disordered stretch occupies residues 67-90 (KRKLQKRKGRRRGHGSRKGAKGAR).

Belongs to the eukaryotic ribosomal protein eL19 family. Part of the 50S ribosomal subunit.

Binds to the 23S rRNA. The polypeptide is Large ribosomal subunit protein eL19 (Archaeoglobus fulgidus (strain ATCC 49558 / DSM 4304 / JCM 9628 / NBRC 100126 / VC-16)).